The sequence spans 300 residues: Energy-coupling factor transporter ATP-binding protein EcfA2 (300 aa).

Positions 3–258 (IKAKNIVKIY…NKFLIENKML (256 aa)) constitute an ABC transporter domain. 40-47 (GQTGSGKT) provides a ligand contact to ATP.

The protein belongs to the ABC transporter superfamily. Energy-coupling factor EcfA family. As to quaternary structure, forms a stable energy-coupling factor (ECF) transporter complex composed of 2 membrane-embedded substrate-binding proteins (S component), 2 ATP-binding proteins (A component) and 2 transmembrane proteins (T component).

The protein resides in the cell membrane. Functionally, ATP-binding (A) component of a common energy-coupling factor (ECF) ABC-transporter complex. Unlike classic ABC transporters this ECF transporter provides the energy necessary to transport a number of different substrates. This is Energy-coupling factor transporter ATP-binding protein EcfA2 from Mesomycoplasma hyopneumoniae (strain 7448) (Mycoplasma hyopneumoniae).